We begin with the raw amino-acid sequence, 549 residues long: CTP synthase (549 aa).

An amidoligase domain region spans residues 1 to 266; it reads MSAKYIFVTG…DKLALRYLHL (266 aa). Serine 14 lines the CTP pocket. A UTP-binding site is contributed by serine 14. Residues 15 to 20 and aspartate 72 contribute to the ATP site; that span reads SLGKGL. Aspartate 72 and glutamate 140 together coordinate Mg(2+). Residues 147 to 149, 187 to 192, and lysine 223 each bind CTP; these read DIE and KTKPTQ. Residues 187-192 and lysine 223 each bind UTP; that span reads KTKPTQ. Residue 239–241 participates in ATP binding; sequence KDV. Residues 291–533 enclose the Glutamine amidotransferase type-1 domain; the sequence is SIGIVGKYVE…VKAAYQNHKP (243 aa). L-glutamine is bound at residue glycine 353. Cysteine 380 acts as the Nucleophile; for glutamine hydrolysis in catalysis. Residues 381–384, glutamate 404, and arginine 461 each bind L-glutamine; that span reads LGMQ. Residues histidine 506 and glutamate 508 contribute to the active site.

This sequence belongs to the CTP synthase family. Homotetramer.

The catalysed reaction is UTP + L-glutamine + ATP + H2O = CTP + L-glutamate + ADP + phosphate + 2 H(+). The enzyme catalyses L-glutamine + H2O = L-glutamate + NH4(+). It catalyses the reaction UTP + NH4(+) + ATP = CTP + ADP + phosphate + 2 H(+). The protein operates within pyrimidine metabolism; CTP biosynthesis via de novo pathway; CTP from UDP: step 2/2. Its activity is regulated as follows. Allosterically activated by GTP, when glutamine is the substrate; GTP has no effect on the reaction when ammonia is the substrate. The allosteric effector GTP functions by stabilizing the protein conformation that binds the tetrahedral intermediate(s) formed during glutamine hydrolysis. Inhibited by the product CTP, via allosteric rather than competitive inhibition. In terms of biological role, catalyzes the ATP-dependent amination of UTP to CTP with either L-glutamine or ammonia as the source of nitrogen. Regulates intracellular CTP levels through interactions with the four ribonucleotide triphosphates. This chain is CTP synthase, found in Acidobacterium capsulatum (strain ATCC 51196 / DSM 11244 / BCRC 80197 / JCM 7670 / NBRC 15755 / NCIMB 13165 / 161).